We begin with the raw amino-acid sequence, 555 residues long: Bicyclo-germacrene synthase (555 aa).

D311 and E315 together coordinate Mg(2+). A DDXXD motif motif is present at residues 311–315; the sequence is DDTYE. 2 homodimerization regions span residues 316-322 and 392-429; these read YATLDEL and EAKW…VGVG. Residues D459 and E467 each coordinate Mg(2+).

The protein belongs to the terpene synthase family. In terms of assembly, homodimer. The cofactor is Mn(2+). Mg(2+) is required as a cofactor. In terms of tissue distribution, expressed in peltate glandular trichomes. Present at low levels in flowers, leaves and stems.

It carries out the reaction (2E,6E)-farnesyl diphosphate = bicyclogermacrene + diphosphate. The enzyme catalyses (2E)-geranyl diphosphate = terpinolene + diphosphate. The catalysed reaction is (2E)-geranyl diphosphate = (4R)-limonene + diphosphate. It catalyses the reaction (2E)-geranyl diphosphate + H2O = (2E)-geraniol + diphosphate. It carries out the reaction (2E,6E)-farnesyl diphosphate = allo-aromadendrene + diphosphate. It functions in the pathway secondary metabolite biosynthesis; terpenoid biosynthesis. Functionally, involved in the biosynthesis of phenolic sesquiterpenes natural products. Sesquiterpene synthase converting (2E,6E)-farnesyl diphosphate (FPP) to alloaromadendrene and bicyclo-germacrene. The product formation is dependent on the metal ions present and in presence of manganese, bicyclo-germacrene is greatly favored while both alloaromadendrene and bicyclo-germacrene are produced in equivalent amounts in the presence of magnesium. Can also convert geranyl diphosphate (GPP) to terpinolene, limonene and geraniol, and this conversion is not affected by the presence of magnesium or manganese. This is Bicyclo-germacrene synthase (TPS4) from Origanum vulgare (Wild marjoram).